Reading from the N-terminus, the 286-residue chain is Shikimate dehydrogenase (NADP(+)) (286 aa).

Shikimate is bound by residues 22–24 (SRS) and threonine 71. Lysine 75 functions as the Proton acceptor in the catalytic mechanism. Position 87 (glutamate 87) interacts with NADP(+). Positions 96 and 111 each coordinate shikimate. NADP(+) contacts are provided by residues 136 to 140 (GAGGA), 160 to 165 (NRTPER), and isoleucine 225. Residue tyrosine 227 coordinates shikimate. NADP(+) is bound at residue glycine 248.

Belongs to the shikimate dehydrogenase family. In terms of assembly, homodimer.

The enzyme catalyses shikimate + NADP(+) = 3-dehydroshikimate + NADPH + H(+). It participates in metabolic intermediate biosynthesis; chorismate biosynthesis; chorismate from D-erythrose 4-phosphate and phosphoenolpyruvate: step 4/7. Involved in the biosynthesis of the chorismate, which leads to the biosynthesis of aromatic amino acids. Catalyzes the reversible NADPH linked reduction of 3-dehydroshikimate (DHSA) to yield shikimate (SA). In Rhizobium meliloti (strain 1021) (Ensifer meliloti), this protein is Shikimate dehydrogenase (NADP(+)).